Reading from the N-terminus, the 127-residue chain is Large ribosomal subunit protein eL32B (127 aa).

This sequence belongs to the eukaryotic ribosomal protein eL32 family. Component of the large ribosomal subunit (LSU). Mature yeast ribosomes consist of a small (40S) and a large (60S) subunit. The 40S small subunit contains 1 molecule of ribosomal RNA (18S rRNA) and at least 33 different proteins. The large 60S subunit contains 3 rRNA molecules (25S, 5.8S and 5S rRNA) and at least 46 different proteins.

The protein resides in the cytoplasm. The protein localises to the nucleus. Its subcellular location is the nucleolus. Functionally, component of the ribosome, a large ribonucleoprotein complex responsible for the synthesis of proteins in the cell. The small ribosomal subunit (SSU) binds messenger RNAs (mRNAs) and translates the encoded message by selecting cognate aminoacyl-transfer RNA (tRNA) molecules. The large subunit (LSU) contains the ribosomal catalytic site termed the peptidyl transferase center (PTC), which catalyzes the formation of peptide bonds, thereby polymerizing the amino acids delivered by tRNAs into a polypeptide chain. The nascent polypeptides leave the ribosome through a tunnel in the LSU and interact with protein factors that function in enzymatic processing, targeting, and the membrane insertion of nascent chains at the exit of the ribosomal tunnel. The polypeptide is Large ribosomal subunit protein eL32B (rpl3201) (Schizosaccharomyces pombe (strain 972 / ATCC 24843) (Fission yeast)).